Here is a 294-residue protein sequence, read N- to C-terminus: Cyclin-G1 (294 aa).

Belongs to the cyclin family. Cyclin G subfamily. In terms of assembly, binds to B' regulatory B subunits of protein phosphatase A (PP2A) following induction by p53 (in vitro). Highest levels in kidney, heart and skeletal muscle.

It is found in the nucleus. Functionally, may play a role in growth regulation. Is associated with G2/M phase arrest in response to DNA damage. May be an intermediate by which p53 mediates its role as an inhibitor of cellular proliferation. The polypeptide is Cyclin-G1 (Ccng1) (Mus musculus (Mouse)).